Here is a 179-residue protein sequence, read N- to C-terminus: ATP synthase subunit delta (179 aa).

It belongs to the ATPase delta chain family. In terms of assembly, F-type ATPases have 2 components, F(1) - the catalytic core - and F(0) - the membrane proton channel. F(1) has five subunits: alpha(3), beta(3), gamma(1), delta(1), epsilon(1). F(0) has three main subunits: a(1), b(2) and c(10-14). The alpha and beta chains form an alternating ring which encloses part of the gamma chain. F(1) is attached to F(0) by a central stalk formed by the gamma and epsilon chains, while a peripheral stalk is formed by the delta and b chains.

Its subcellular location is the cell inner membrane. Functionally, f(1)F(0) ATP synthase produces ATP from ADP in the presence of a proton or sodium gradient. F-type ATPases consist of two structural domains, F(1) containing the extramembraneous catalytic core and F(0) containing the membrane proton channel, linked together by a central stalk and a peripheral stalk. During catalysis, ATP synthesis in the catalytic domain of F(1) is coupled via a rotary mechanism of the central stalk subunits to proton translocation. This protein is part of the stalk that links CF(0) to CF(1). It either transmits conformational changes from CF(0) to CF(1) or is implicated in proton conduction. The protein is ATP synthase subunit delta of Bordetella avium (strain 197N).